Here is a 258-residue protein sequence, read N- to C-terminus: MYKDLTGKTAIVTGSSKGIGKAIAERFGKEKMNVVVNYHSDPSGADETLEIIKQNGGKAVSVEADVSKEEGIQALLDTALEHFGTLDVMVNNSGFNGVEAMPHEMSLEDWQRVIDVNVTGTFLGAKAALNHMMKNNIKGNVLNISSVHQQIPRPVNVQYSTSKGGIKMMTETLALNYADKGIRVNAIAPGTIATESNVDTKKEESRQKQLKKIPMKAFGKPEEVAAAAAWLVSEEASYVTGATLFVDGGMTLYPSQLE.

11 to 35 (IVTGSSKGIGKAIAERFGKEKMNVV) is a binding site for NADP(+). Ser146 is a binding site for substrate. The active-site Proton acceptor is the Tyr159.

Belongs to the short-chain dehydrogenases/reductases (SDR) family. In terms of assembly, homotetramer.

It carries out the reaction D-glucose + NAD(+) = D-glucono-1,5-lactone + NADH + H(+). The enzyme catalyses D-glucose + NADP(+) = D-glucono-1,5-lactone + NADPH + H(+). In Bacillus subtilis (strain 168), this protein is Glucose 1-dehydrogenase 2 (ycdF).